A 418-amino-acid chain; its full sequence is Peptide chain release factor subunit 1 (418 aa).

This sequence belongs to the eukaryotic release factor 1 family. As to quaternary structure, heterodimer of two subunits, one of which binds GTP.

The protein localises to the cytoplasm. Directs the termination of nascent peptide synthesis (translation) in response to the termination codons UAA, UAG and UGA. The polypeptide is Peptide chain release factor subunit 1 (Haloarcula marismortui (strain ATCC 43049 / DSM 3752 / JCM 8966 / VKM B-1809) (Halobacterium marismortui)).